The primary structure comprises 115 residues: Large ribosomal subunit protein uL24 (115 aa).

The protein belongs to the universal ribosomal protein uL24 family. Part of the 50S ribosomal subunit.

Functionally, one of two assembly initiator proteins, it binds directly to the 5'-end of the 23S rRNA, where it nucleates assembly of the 50S subunit. One of the proteins that surrounds the polypeptide exit tunnel on the outside of the subunit. The polypeptide is Large ribosomal subunit protein uL24 (Deinococcus deserti (strain DSM 17065 / CIP 109153 / LMG 22923 / VCD115)).